A 298-amino-acid polypeptide reads, in one-letter code: Transcription factor RAX2 (298 aa).

HTH myb-type domains lie at 9 to 62 (KANV…LNYL) and 63 to 117 (RPNI…KKKL). 2 consecutive DNA-binding regions (H-T-H motif) follow at residues 38–62 (WIAL…LNYL) and 90–113 (WSVI…NTKL).

Ubiquitous, with higher levels in roots, flowers, and shoot tips. Found in all cells of the shoot tips.

The protein resides in the nucleus. Functionally, transcription activator. Positively regulates axillary meristems (AMs) formation and development, especially during inflorescence. The sequence is that of Transcription factor RAX2 (RAX2) from Arabidopsis thaliana (Mouse-ear cress).